Consider the following 190-residue polypeptide: Glutathione peroxidase 2 (190 aa).

Sec-40 is an active-site residue. A non-standard amino acid (selenocysteine) is located at residue Sec-40.

Belongs to the glutathione peroxidase family. Homotetramer. In terms of tissue distribution, mucosal epithelium of the gastrointestinal tract.

Its subcellular location is the cytoplasm. The protein localises to the cytosol. It catalyses the reaction 2 glutathione + H2O2 = glutathione disulfide + 2 H2O. The catalysed reaction is a hydroperoxy polyunsaturated fatty acid + 2 glutathione = a hydroxy polyunsaturated fatty acid + glutathione disulfide + H2O. The enzyme catalyses tert-butyl hydroperoxide + 2 glutathione = tert-butanol + glutathione disulfide + H2O. It carries out the reaction cumene hydroperoxide + 2 glutathione = 2-phenylpropan-2-ol + glutathione disulfide + H2O. It catalyses the reaction (13S)-hydroperoxy-(9Z,11E)-octadecadienoate + 2 glutathione = (13S)-hydroxy-(9Z,11E)-octadecadienoate + glutathione disulfide + H2O. The catalysed reaction is (5S)-hydroperoxy-(6E,8Z,11Z,14Z)-eicosatetraenoate + 2 glutathione = (5S)-hydroxy-(6E,8Z,11Z,14Z)-eicosatetraenoate + glutathione disulfide + H2O. The enzyme catalyses (12R)-hydroperoxy-(5Z,8Z,10E,14Z)-eicosatetraenoate + 2 glutathione = (12R)-hydroxy-(5Z,8Z,10E,14Z)-eicosatetraenoate + glutathione disulfide + H2O. It carries out the reaction (15S)-hydroperoxy-(5Z,8Z,11Z,13E)-eicosatetraenoate + 2 glutathione = (15S)-hydroxy-(5Z,8Z,11Z,13E)-eicosatetraenoate + glutathione disulfide + H2O. Catalyzes the reduction of hydroperoxides in a glutathione-dependent manner thus regulating cellular redox homeostasis. Can reduce small soluble hydroperoxide such as H2O2. Can reduce cumene hydroperoxide and tert-butyl hydroperoxide, as well as several fatty acid-derived hydroperoxides. Cannot reduce phosphatidycholine hydroperoxide. The chain is Glutathione peroxidase 2 (Gpx2) from Rattus norvegicus (Rat).